The following is a 366-amino-acid chain: S-adenosylmethionine:tRNA ribosyltransferase-isomerase (366 aa).

The protein belongs to the QueA family. In terms of assembly, monomer.

It is found in the cytoplasm. The enzyme catalyses 7-aminomethyl-7-carbaguanosine(34) in tRNA + S-adenosyl-L-methionine = epoxyqueuosine(34) in tRNA + adenine + L-methionine + 2 H(+). It participates in tRNA modification; tRNA-queuosine biosynthesis. In terms of biological role, transfers and isomerizes the ribose moiety from AdoMet to the 7-aminomethyl group of 7-deazaguanine (preQ1-tRNA) to give epoxyqueuosine (oQ-tRNA). In Agrobacterium fabrum (strain C58 / ATCC 33970) (Agrobacterium tumefaciens (strain C58)), this protein is S-adenosylmethionine:tRNA ribosyltransferase-isomerase.